The following is a 557-amino-acid chain: Potassium-transporting ATPase potassium-binding subunit (557 aa).

12 consecutive transmembrane segments (helical) span residues 5–25, 63–83, 132–152, 170–190, 253–273, 283–303, 329–349, 356–376, 379–399, 416–436, 484–504, and 526–546; these read GFLL…PLGS, LSAI…MLLG, GLTV…FAFI, LLRI…LFFI, FVQM…FGEV, LLWA…WAEV, VLVS…AVIA, ALGG…FGGV, GLYG…LMIG, LTAL…ALAM, LLAF…MAIA, and LFVG…FIPA.

The protein belongs to the KdpA family. The system is composed of three essential subunits: KdpA, KdpB and KdpC.

It is found in the cell inner membrane. In terms of biological role, part of the high-affinity ATP-driven potassium transport (or Kdp) system, which catalyzes the hydrolysis of ATP coupled with the electrogenic transport of potassium into the cytoplasm. This subunit binds the periplasmic potassium ions and delivers the ions to the membrane domain of KdpB through an intramembrane tunnel. The polypeptide is Potassium-transporting ATPase potassium-binding subunit (Escherichia coli (strain SMS-3-5 / SECEC)).